A 581-amino-acid chain; its full sequence is Protein alan shepard (581 aa).

The segment covering 1-10 (MHPRYSPAPP) has biased composition (pro residues). Residues 1–73 (MHPRYSPAPP…AVTAAPPTPR (73 aa)) are disordered. Tyr5 carries the post-translational modification Phosphotyrosine. Residues 35–54 (ANNSQQLPPQMPRSQNYANG) are compositionally biased toward polar residues. Low complexity predominate over residues 55 to 68 (SSSSAAAASAVTAA). Residues Tyr128 and Tyr146 each carry the phosphotyrosine modification. Over residues 168–226 (PATTTYGQRVPTAASPSNTNSSSSSNTGSQSGTLSTSLSHTTNTNTNMGPNGTAQNQNQ) the composition is skewed to low complexity. Residues 168–234 (PATTTYGQRV…NQQGGGGEQL (67 aa)) are disordered. RRM domains are found at residues 237–310 (TNLY…MAKQ) and 316–395 (TNLY…FADG). The disordered stretch occupies residues 555–581 (MTDSEQASTAASPDEAYTQYPHQAAPK).

Has a role in the perception of gravity. In Drosophila willistoni (Fruit fly), this protein is Protein alan shepard.